The sequence spans 86 residues: DNA replication protein 1 (86 aa).

Residues 38–67 (LELEKKMTKLEHENKLMKNALYELSRMENN) are a coiled coil.

Belongs to the phi29likevirus DNA replication protein 1 family. Homomultimer. Self-associates into large complexes forming long filamentous structures. Interacts (via N-terminus) with the primer terminal protein. Interacts with host FtsZ protein.

It is found in the host membrane. Protein that assembles into highly ordered structures and provides a specific site for viral DNA replication. Probably anchors the viral DNA replisome to the host membrane. This is DNA replication protein 1 (1) from Bacillus subtilis (Bacteriophage phi-29).